A 113-amino-acid polypeptide reads, in one-letter code: ATP-dependent Clp protease adapter protein ClpS (113 aa).

Residues 1-24 (MTAQLHMMSDKHDQDNDASVLLQT) are disordered.

The protein belongs to the ClpS family. Binds to the N-terminal domain of the chaperone ClpA.

Its function is as follows. Involved in the modulation of the specificity of the ClpAP-mediated ATP-dependent protein degradation. The sequence is that of ATP-dependent Clp protease adapter protein ClpS from Ruegeria pomeroyi (strain ATCC 700808 / DSM 15171 / DSS-3) (Silicibacter pomeroyi).